The sequence spans 457 residues: Senescence-associated protein OSA15, chloroplastic (457 aa).

Residues 1-57 (MATRIPGTVAASGVYYNDQYRMPCKLKGIHCMALNCIPQKAKVRKCMNGYQSTFRFC) constitute a chloroplast transit peptide.

It belongs to the ATA15/OSA15 family. Expressed in leaves (at protein level).

It is found in the plastid. The protein localises to the chloroplast. May be involved in the regulation of leaf senescence. This is Senescence-associated protein OSA15, chloroplastic from Oryza sativa subsp. japonica (Rice).